A 496-amino-acid chain; its full sequence is Glutamyl-tRNA(Gln) amidotransferase subunit A (496 aa).

Catalysis depends on charge relay system residues lysine 75 and serine 150. The active-site Acyl-ester intermediate is the serine 174.

Belongs to the amidase family. GatA subfamily. As to quaternary structure, heterotrimer of A, B and C subunits.

The enzyme catalyses L-glutamyl-tRNA(Gln) + L-glutamine + ATP + H2O = L-glutaminyl-tRNA(Gln) + L-glutamate + ADP + phosphate + H(+). Allows the formation of correctly charged Gln-tRNA(Gln) through the transamidation of misacylated Glu-tRNA(Gln) in organisms which lack glutaminyl-tRNA synthetase. The reaction takes place in the presence of glutamine and ATP through an activated gamma-phospho-Glu-tRNA(Gln). The polypeptide is Glutamyl-tRNA(Gln) amidotransferase subunit A (Burkholderia lata (strain ATCC 17760 / DSM 23089 / LMG 22485 / NCIMB 9086 / R18194 / 383)).